The primary structure comprises 279 residues: Indole-3-glycerol phosphate synthase (279 aa).

The protein belongs to the TrpC family.

The catalysed reaction is 1-(2-carboxyphenylamino)-1-deoxy-D-ribulose 5-phosphate + H(+) = (1S,2R)-1-C-(indol-3-yl)glycerol 3-phosphate + CO2 + H2O. Its pathway is amino-acid biosynthesis; L-tryptophan biosynthesis; L-tryptophan from chorismate: step 4/5. This is Indole-3-glycerol phosphate synthase from Ectopseudomonas mendocina (strain ymp) (Pseudomonas mendocina).